The primary structure comprises 240 residues: Large ribosomal subunit protein uL2 (240 aa).

Residues 1–11 (MGKRLISQNRG) show a composition bias toward polar residues. 2 disordered regions span residues 1-31 (MGKR…VKYR) and 206-240 (GGGR…TGRK). 2 stretches are compositionally biased toward basic residues: residues 13-28 (GTPK…KGAV) and 224-240 (SPGR…TGRK).

Belongs to the universal ribosomal protein uL2 family. Part of the 50S ribosomal subunit. Forms a bridge to the 30S subunit in the 70S ribosome.

One of the primary rRNA binding proteins. Required for association of the 30S and 50S subunits to form the 70S ribosome, for tRNA binding and peptide bond formation. It has been suggested to have peptidyltransferase activity; this is somewhat controversial. Makes several contacts with the 16S rRNA in the 70S ribosome. The sequence is that of Large ribosomal subunit protein uL2 from Methanococcus maripaludis (strain C6 / ATCC BAA-1332).